A 735-amino-acid polypeptide reads, in one-letter code: Phosphoribosylformylglycinamidine synthase subunit PurL (735 aa).

His-44 is an active-site residue. The ATP site is built by Tyr-47 and Lys-86. Glu-88 is a Mg(2+) binding site. Substrate is bound by residues 89 to 92 and Arg-111; that span reads SHNH. The active-site Proton acceptor is His-90. Residue Asp-112 participates in Mg(2+) binding. Gln-240 provides a ligand contact to substrate. Asp-268 contributes to the Mg(2+) binding site. Position 312-314 (312-314) interacts with substrate; it reads ESQ. 2 residues coordinate ATP: Asp-496 and Gly-533. Asn-534 lines the Mg(2+) pocket. Substrate is bound at residue Ser-536.

Belongs to the FGAMS family. Monomer. Part of the FGAM synthase complex composed of 1 PurL, 1 PurQ and 2 PurS subunits.

Its subcellular location is the cytoplasm. It carries out the reaction N(2)-formyl-N(1)-(5-phospho-beta-D-ribosyl)glycinamide + L-glutamine + ATP + H2O = 2-formamido-N(1)-(5-O-phospho-beta-D-ribosyl)acetamidine + L-glutamate + ADP + phosphate + H(+). It participates in purine metabolism; IMP biosynthesis via de novo pathway; 5-amino-1-(5-phospho-D-ribosyl)imidazole from N(2)-formyl-N(1)-(5-phospho-D-ribosyl)glycinamide: step 1/2. Functionally, part of the phosphoribosylformylglycinamidine synthase complex involved in the purines biosynthetic pathway. Catalyzes the ATP-dependent conversion of formylglycinamide ribonucleotide (FGAR) and glutamine to yield formylglycinamidine ribonucleotide (FGAM) and glutamate. The FGAM synthase complex is composed of three subunits. PurQ produces an ammonia molecule by converting glutamine to glutamate. PurL transfers the ammonia molecule to FGAR to form FGAM in an ATP-dependent manner. PurS interacts with PurQ and PurL and is thought to assist in the transfer of the ammonia molecule from PurQ to PurL. In Nitratiruptor sp. (strain SB155-2), this protein is Phosphoribosylformylglycinamidine synthase subunit PurL.